The following is an 882-amino-acid chain: Alanine--tRNA ligase (882 aa).

The Zn(2+) site is built by histidine 574, histidine 578, cysteine 682, and histidine 686. The tract at residues 853–882 is disordered; sequence GGRGGGKGALAQGGGLDPRKAREALPGLLP. The segment covering 854-868 has biased composition (gly residues); the sequence is GRGGGKGALAQGGGL.

The protein belongs to the class-II aminoacyl-tRNA synthetase family. The cofactor is Zn(2+).

The protein localises to the cytoplasm. The enzyme catalyses tRNA(Ala) + L-alanine + ATP = L-alanyl-tRNA(Ala) + AMP + diphosphate. Catalyzes the attachment of alanine to tRNA(Ala) in a two-step reaction: alanine is first activated by ATP to form Ala-AMP and then transferred to the acceptor end of tRNA(Ala). Also edits incorrectly charged Ser-tRNA(Ala) and Gly-tRNA(Ala) via its editing domain. This Thermus thermophilus (strain ATCC 27634 / DSM 579 / HB8) protein is Alanine--tRNA ligase.